Reading from the N-terminus, the 533-residue chain is GMP synthase [glutamine-hydrolyzing] (533 aa).

One can recognise a Glutamine amidotransferase type-1 domain in the interval 25 to 215 (SIVIFDFGSQ…VFNICKCHAN (191 aa)). The active-site Nucleophile is the Cys-102. Active-site residues include His-189 and Glu-191. Residues 216–408 (WTMGNYIQES…LGLPDEMIWR (193 aa)) form the GMPS ATP-PPase domain. Residue 243 to 249 (SGGVDSA) participates in ATP binding.

As to quaternary structure, homodimer.

It carries out the reaction XMP + L-glutamine + ATP + H2O = GMP + L-glutamate + AMP + diphosphate + 2 H(+). Its pathway is purine metabolism; GMP biosynthesis; GMP from XMP (L-Gln route): step 1/1. Functionally, catalyzes the synthesis of GMP from XMP. The protein is GMP synthase [glutamine-hydrolyzing] of Dehalococcoides mccartyi (strain CBDB1).